We begin with the raw amino-acid sequence, 156 residues long: Deoxyuridine 5'-triphosphate nucleotidohydrolase (156 aa).

Substrate-binding positions include 76 to 78 (RSG), Asn-89, 93 to 95 (TVD), and Lys-103.

It belongs to the dUTPase family. Mg(2+) serves as cofactor.

It catalyses the reaction dUTP + H2O = dUMP + diphosphate + H(+). The protein operates within pyrimidine metabolism; dUMP biosynthesis; dUMP from dCTP (dUTP route): step 2/2. This enzyme is involved in nucleotide metabolism: it produces dUMP, the immediate precursor of thymidine nucleotides and it decreases the intracellular concentration of dUTP so that uracil cannot be incorporated into DNA. In Rhizobium johnstonii (strain DSM 114642 / LMG 32736 / 3841) (Rhizobium leguminosarum bv. viciae), this protein is Deoxyuridine 5'-triphosphate nucleotidohydrolase.